Consider the following 591-residue polypeptide: Putative F-box protein At1g32140 (591 aa).

Residues T2 to R49 enclose the F-box domain. Residues A567 to K581 are compositionally biased toward basic residues. The disordered stretch occupies residues A567 to V591.

The polypeptide is Putative F-box protein At1g32140 (Arabidopsis thaliana (Mouse-ear cress)).